We begin with the raw amino-acid sequence, 604 residues long: MSHPSWLPPKSTNEPVGHVTARMETTHAFGTPSISVSTQQTPKKFAPVVAPKPKYNPYKQPGGDGDFLPPPPPPVDDLGNITSQGAFPPPPPLDDVAFNVQVNPGGKTLEERRSSLDAEIDSLTSILADLESSSPYKPRIQQGSGTSSSAATTPSVSTPVTGHKRMIIPNQPPLTATKKSTAKGPGQPAPIPVTPIGTLKPQPVPASYTTASTPSRPTFNVQVRTAQPSPHYQPPGPQPTHYGSLGPGQPYAAPPARPPGAQQYGSPQPRGPDYGYAPPPARPSEPSYGYAPQQGRYQDPYYGGYGGRNGSEAPYMPQSTWKVEPAYPSSNTVGQAPPGMYQHPGPKKTYITDPVLAPQPLQQKSGYPSSGPTSSTPAFRPEDELEHLTKKMLYDMENPPSDDYFGRCARCGENVVGEGTGCTAMDQVFHVECFTCMMCNNKLRGQPFYAVEKKAYCEPCYINTLEQCSVCAKPIMERILRATGKAYHPHCFTCVMCHRSLDGIPFTVDAGGNIHCIEDFHKKFAPRCSVCKEPIMPAPGQEETVRIVALDRDFHVQCYRCEDCGGLLSEGDNQGCYPLDGHILCKTCNSARIQALTAKASTDL.

2 disordered regions span residues threonine 31–valine 96 and aspartate 129–proline 381. The span at proline 32–threonine 41 shows a compositional bias: polar residues. 2 stretches are compositionally biased toward low complexity: residues proline 42 to proline 53 and glycine 143 to threonine 161. The segment covering serine 207–alanine 226 has biased composition (polar residues). Over residues serine 365–proline 377 the composition is skewed to low complexity. LIM zinc-binding domains are found at residues glycine 406–leucine 465, glutamate 466–proline 526, and arginine 527–alanine 595.

It belongs to the zyxin/ajuba family.

The protein localises to the nucleus. The protein resides in the cytoplasm. It localises to the cell junction. Its function is as follows. May play a structural role at sites of cell adhesion in maintaining cell shape and motility. May be involved in signal transduction from cell adhesion sites to the nucleus. This chain is Lipoma-preferred partner homolog (LPP), found in Gallus gallus (Chicken).